The following is a 182-amino-acid chain: Transcription termination/antitermination protein NusG (182 aa).

The protein belongs to the NusG family.

Its function is as follows. Participates in transcription elongation, termination and antitermination. This Chlamydia muridarum (strain MoPn / Nigg) protein is Transcription termination/antitermination protein NusG.